Consider the following 276-residue polypeptide: Tryptophan synthase alpha chain (276 aa).

Catalysis depends on proton acceptor residues glutamate 55 and aspartate 66.

Belongs to the TrpA family. Tetramer of two alpha and two beta chains.

The enzyme catalyses (1S,2R)-1-C-(indol-3-yl)glycerol 3-phosphate + L-serine = D-glyceraldehyde 3-phosphate + L-tryptophan + H2O. Its pathway is amino-acid biosynthesis; L-tryptophan biosynthesis; L-tryptophan from chorismate: step 5/5. In terms of biological role, the alpha subunit is responsible for the aldol cleavage of indoleglycerol phosphate to indole and glyceraldehyde 3-phosphate. In Gloeobacter violaceus (strain ATCC 29082 / PCC 7421), this protein is Tryptophan synthase alpha chain.